A 156-amino-acid chain; its full sequence is 6,7-dimethyl-8-ribityllumazine synthase (156 aa).

5-amino-6-(D-ribitylamino)uracil contacts are provided by residues Phe23, 57 to 59, and 81 to 83; these read AYE and AII. 86–87 lines the (2S)-2-hydroxy-3-oxobutyl phosphate pocket; sequence GT. The active-site Proton donor is the His89. Phe114 contacts 5-amino-6-(D-ribitylamino)uracil. Residue Arg128 coordinates (2S)-2-hydroxy-3-oxobutyl phosphate.

This sequence belongs to the DMRL synthase family.

The enzyme catalyses (2S)-2-hydroxy-3-oxobutyl phosphate + 5-amino-6-(D-ribitylamino)uracil = 6,7-dimethyl-8-(1-D-ribityl)lumazine + phosphate + 2 H2O + H(+). It participates in cofactor biosynthesis; riboflavin biosynthesis; riboflavin from 2-hydroxy-3-oxobutyl phosphate and 5-amino-6-(D-ribitylamino)uracil: step 1/2. In terms of biological role, catalyzes the formation of 6,7-dimethyl-8-ribityllumazine by condensation of 5-amino-6-(D-ribitylamino)uracil with 3,4-dihydroxy-2-butanone 4-phosphate. This is the penultimate step in the biosynthesis of riboflavin. The sequence is that of 6,7-dimethyl-8-ribityllumazine synthase from Helicobacter pylori (strain ATCC 700392 / 26695) (Campylobacter pylori).